Reading from the N-terminus, the 199-residue chain is Recombination protein RecR (199 aa).

The C4-type zinc-finger motif lies at 57 to 72; it reads CQACRTFTEETLCPIC. One can recognise a Toprim domain in the interval 81–176; sequence EVICVVETPA…SVSRIAHGVP (96 aa).

It belongs to the RecR family.

Functionally, may play a role in DNA repair. It seems to be involved in an RecBC-independent recombinational process of DNA repair. It may act with RecF and RecO. The polypeptide is Recombination protein RecR (Shewanella woodyi (strain ATCC 51908 / MS32)).